The following is a 170-amino-acid chain: MLRTTRLWTTRMPTVSKLFLRNSSGNALNKNKLPFLYSSQGPQAVRYTSQHEWIAVHQDKTAFVGITKYATDALGDATYVELPEVGTEIAQGESLGSIESVKSASEIYQPADGTVEEINTNLEENPGVVNEDPMGDGWLVKMKLGEGVNVEQVEGLMSLEQYEKTLVHDD.

The transit peptide at 1 to 47 (MLRTTRLWTTRMPTVSKLFLRNSSGNALNKNKLPFLYSSQGPQAVRY) directs the protein to the mitochondrion. The Lipoyl-binding domain maps to 61–143 (TAFVGITKYA…MGDGWLVKMK (83 aa)). Lys102 carries the post-translational modification N6-lipoyllysine.

The protein belongs to the GcvH family. In terms of assembly, component of the glycine decarboxylase complex (GDC), which is composed of four proteins: P, T, L and H. (R)-lipoate is required as a cofactor.

It localises to the mitochondrion. Functionally, the glycine cleavage system (glycine decarboxylase complex) catalyzes the degradation of glycine. The H protein shuttles the methylamine group of glycine from the P protein to the T protein. The sequence is that of Glycine cleavage system H protein, mitochondrial (GCV3) from Saccharomyces cerevisiae (strain ATCC 204508 / S288c) (Baker's yeast).